The following is a 421-amino-acid chain: 3-oxoacyl-[acyl-carrier-protein] synthase 2 (421 aa).

The 417-residue stretch at 1-417 (MRRVVITGTG…GTNASLILRR (417 aa)) folds into the Ketosynthase family 3 (KS3) domain. Catalysis depends on for beta-ketoacyl synthase activity residues Cys170, His311, and His347.

It belongs to the thiolase-like superfamily. Beta-ketoacyl-ACP synthases family. As to quaternary structure, homodimer.

The catalysed reaction is a fatty acyl-[ACP] + malonyl-[ACP] + H(+) = a 3-oxoacyl-[ACP] + holo-[ACP] + CO2. It carries out the reaction (9Z)-hexadecenoyl-[ACP] + malonyl-[ACP] + H(+) = 3-oxo-(11Z)-octadecenoyl-[ACP] + holo-[ACP] + CO2. It functions in the pathway lipid metabolism; fatty acid biosynthesis. Its function is as follows. Involved in the type II fatty acid elongation cycle. Catalyzes the elongation of a wide range of acyl-ACP by the addition of two carbons from malonyl-ACP to an acyl acceptor. Can efficiently catalyze the conversion of palmitoleoyl-ACP (cis-hexadec-9-enoyl-ACP) to cis-vaccenoyl-ACP (cis-octadec-11-enoyl-ACP), an essential step in the thermal regulation of fatty acid composition. The polypeptide is 3-oxoacyl-[acyl-carrier-protein] synthase 2 (fabF) (Rhizobium meliloti (strain 1021) (Ensifer meliloti)).